An 857-amino-acid chain; its full sequence is Thiamine repressible genes regulatory protein thi5 (857 aa).

Residues 38–64 (CLSCRAKKIRCSGSEPCQACIATPSQC) constitute a DNA-binding region (zn(2)-C6 fungal-type). 2 disordered regions span residues 152-175 (AVKSANVSFPSSSTPPSSDSNFSS) and 797-819 (GHALGNPESNNSSNSFKPSHPSQ). The span at 159–175 (SFPSSSTPPSSDSNFSS) shows a compositional bias: low complexity. The span at 803-819 (PESNNSSNSFKPSHPSQ) shows a compositional bias: polar residues.

The protein resides in the nucleus. In terms of biological role, transcription factor that activates the nmt1 promoter. Regulation of thiamine repressible genes. Negatively regulates conjugation during meiosis, by inducing negative regulators which delay conjugation. Involved in thi1 regulation. The sequence is that of Thiamine repressible genes regulatory protein thi5 (thi5) from Schizosaccharomyces pombe (strain 972 / ATCC 24843) (Fission yeast).